Consider the following 161-residue polypeptide: Transcription antitermination protein NusB (161 aa).

Belongs to the NusB family.

Its function is as follows. Involved in transcription antitermination. Required for transcription of ribosomal RNA (rRNA) genes. Binds specifically to the boxA antiterminator sequence of the ribosomal RNA (rrn) operons. This Nitrobacter winogradskyi (strain ATCC 25391 / DSM 10237 / CIP 104748 / NCIMB 11846 / Nb-255) protein is Transcription antitermination protein NusB.